A 1336-amino-acid chain; its full sequence is Probable ATP-dependent DNA helicase HFM1 (1336 aa).

The Helicase ATP-binding domain maps to 159–347 (EHLLYSDRNF…WLSDENSPGV (189 aa)). Position 172 to 179 (172 to 179 (APTGSGKT)) interacts with ATP. The DEAH box motif lies at 280-283 (DEVH). Positions 388–589 (NIIQTYSDGR…DVKVALEWIR (202 aa)) constitute a Helicase C-terminal domain. In terms of domain architecture, SEC63 spans 646 to 961 (PTETGKLMAL…GLDIQQSFNI (316 aa)). The segment at 1016–1031 (CNHNCKNKDACGHECC) adopts a C4-type zinc-finger fold.

It belongs to the helicase family. SKI2 subfamily. It depends on Zn(2+) as a cofactor.

It catalyses the reaction Couples ATP hydrolysis with the unwinding of duplex DNA by translocating in the 3'-5' direction.. The catalysed reaction is ATP + H2O = ADP + phosphate + H(+). Required for crossover formation and complete synapsis of homologous chromosomes during meiosis. The chain is Probable ATP-dependent DNA helicase HFM1 (hfm1) from Xenopus tropicalis (Western clawed frog).